Reading from the N-terminus, the 134-residue chain is Holo-[acyl-carrier-protein] synthase (134 aa).

Mg(2+)-binding residues include Asp-8 and Glu-57.

It belongs to the P-Pant transferase superfamily. AcpS family. Mg(2+) is required as a cofactor.

Its subcellular location is the cytoplasm. It catalyses the reaction apo-[ACP] + CoA = holo-[ACP] + adenosine 3',5'-bisphosphate + H(+). Transfers the 4'-phosphopantetheine moiety from coenzyme A to a Ser of acyl-carrier-protein. This Rhizobium etli (strain ATCC 51251 / DSM 11541 / JCM 21823 / NBRC 15573 / CFN 42) protein is Holo-[acyl-carrier-protein] synthase.